The sequence spans 252 residues: tRNA1(Val) (adenine(37)-N6)-methyltransferase (252 aa).

The protein belongs to the methyltransferase superfamily. tRNA (adenine-N(6)-)-methyltransferase family.

The protein resides in the cytoplasm. It carries out the reaction adenosine(37) in tRNA1(Val) + S-adenosyl-L-methionine = N(6)-methyladenosine(37) in tRNA1(Val) + S-adenosyl-L-homocysteine + H(+). In terms of biological role, specifically methylates the adenine in position 37 of tRNA(1)(Val) (anticodon cmo5UAC). This Yersinia pseudotuberculosis serotype O:3 (strain YPIII) protein is tRNA1(Val) (adenine(37)-N6)-methyltransferase.